The chain runs to 765 residues: Transient receptor potential cation channel subfamily V member 6 (765 aa).

Residues 1–367 (MGPLQGDGGP…SLKWKRYGRP (367 aa)) are Cytoplasmic-facing. 3 ANK repeats span residues 84–114 (IWES…KVHQ), 118–147 (MGET…ELVF), and 156–185 (EGQT…SVSA). The interval 133-143 (EAAMVLMEAAP) is interaction with calmodulin. A Phosphotyrosine; by SRC modification is found at tyrosine 201. ANK repeat units follow at residues 202–231 (FGEH…DIRA), 235–277 (LGNT…LVPN), and 279–308 (QGLT…HTQW). Residues 368–388 (YFCMLGAIYLLYIICFTMCCI) traverse the membrane as a helical segment. The Extracellular portion of the chain corresponds to 389 to 425 (YRPLKPRTNNRTSPRDNTLLQQKLLQEAYMTPKDDIR). Asparagine 398 carries N-linked (GlcNAc...) asparagine glycosylation. Residues 426–448 (LVGELVTVIGAIIILLVEVPDIF) form a helical membrane-spanning segment. The Cytoplasmic portion of the chain corresponds to 449–463 (RMGVTRFFGQTILGG). Residues 464–483 (PFHVLIITYAFMVLVTMVMR) form a helical membrane-spanning segment. The Extracellular segment spans residues 484-489 (LISASG). The helical transmembrane segment at 490 to 509 (EVVPMSFALVLGWCNVMYFA) threads the bilayer. Over 510 to 529 (RGFQMLGPFTIMIQKMIFGD) the chain is Cytoplasmic. Residues 530–552 (LMRFCWLMAVVILGFASAFYIIF) form a helical membrane-spanning segment. The Extracellular portion of the chain corresponds to 553–565 (QTEDPEELGHFYD). The segment at residues 566 to 585 (YPMALFSTFELFLTIIDGPA) is an intramembrane region (pore-forming). The Selectivity filter signature appears at 581–585 (IDGPA). Aspartate 582 provides a ligand contact to Ca(2+). Residues 586 to 596 (NYNVDLPFMYS) are Extracellular-facing. The helical transmembrane segment at 597 to 617 (ITYAAFAIIATLLMLNLLIAM) threads the bilayer. The Cytoplasmic segment spans residues 618–765 (MGDTHWRVAH…EDGESWEYQI (148 aa)). The interval 638–642 (VATTV) is interaction with S100A10. The tract at residues 731–751 (SSANWERLRQGTLRRDLRGII) is interaction with calmodulin. Threonine 742 carries the phosphothreonine; by PKC/PRKCA modification.

The protein belongs to the transient receptor (TC 1.A.4) family. TrpV subfamily. TRPV6 sub-subfamily. In terms of assembly, homotetramer. Probably also forms heterotetramers with TRPV5. Interacts with TRPV5. Interacts with S100A10 and probably with the ANAX2-S100A10 heterotetramer. The interaction with S100A10 is required for the trafficking to the plasma membrane. Interacts with BSPRY. Interacts with TCAF1 and TCAF2 isoform 2. Interacts with calmodulin. In terms of processing, glycosylated. Phosphorylation at Tyr-201 by SRC leads to an increased calcium influx through the channel. Probably dephosphorylated at this site by PTPN1. Phosphorylation by PRKCA at the calmodulin binding site delays channel inactivation. Expressed at high levels in the gastrointestinal tract, including esophagus, stomach, duodenum, jejunum, ileum and colon, and in pancreas, placenta, prostate and salivary gland. Expressed at moderate levels in liver, kidney and testis. Expressed in trophoblasts of placenta villus trees (at protein level). Expressed in locally advanced prostate cancer, metastatic and androgen-insensitive prostatic lesions but not detected in healthy prostate tissue and benign prostatic hyperplasia.

The protein localises to the cell membrane. The catalysed reaction is Ca(2+)(in) = Ca(2+)(out). In terms of biological role, calcium selective cation channel that mediates Ca(2+) uptake in various tissues, including the intestine. Important for normal Ca(2+) ion homeostasis in the body, including bone and skin. The channel is activated by low internal calcium level, probably including intracellular calcium store depletion, and the current exhibits an inward rectification. Inactivation includes both a rapid Ca(2+)-dependent and a slower Ca(2+)-calmodulin-dependent mechanism; the latter may be regulated by phosphorylation. In vitro, is slowly inhibited by Mg(2+) in a voltage-independent manner. Heteromeric assembly with TRPV5 seems to modify channel properties. TRPV5-TRPV6 heteromultimeric concatemers exhibit voltage-dependent gating. This Homo sapiens (Human) protein is Transient receptor potential cation channel subfamily V member 6 (TRPV6).